The primary structure comprises 61 residues: Large ribosomal subunit protein uL30 (61 aa).

The protein belongs to the universal ribosomal protein uL30 family. Part of the 50S ribosomal subunit.

In Colwellia psychrerythraea (strain 34H / ATCC BAA-681) (Vibrio psychroerythus), this protein is Large ribosomal subunit protein uL30.